The following is a 410-amino-acid chain: Arginine biosynthesis bifunctional protein ArgJ (410 aa).

Substrate contacts are provided by threonine 158, lysine 184, threonine 195, glutamate 282, asparagine 405, and serine 410. The Nucleophile role is filled by threonine 195.

Belongs to the ArgJ family. In terms of assembly, heterotetramer of two alpha and two beta chains.

The protein localises to the cytoplasm. The catalysed reaction is N(2)-acetyl-L-ornithine + L-glutamate = N-acetyl-L-glutamate + L-ornithine. It catalyses the reaction L-glutamate + acetyl-CoA = N-acetyl-L-glutamate + CoA + H(+). It functions in the pathway amino-acid biosynthesis; L-arginine biosynthesis; L-ornithine and N-acetyl-L-glutamate from L-glutamate and N(2)-acetyl-L-ornithine (cyclic): step 1/1. The protein operates within amino-acid biosynthesis; L-arginine biosynthesis; N(2)-acetyl-L-ornithine from L-glutamate: step 1/4. In terms of biological role, catalyzes two activities which are involved in the cyclic version of arginine biosynthesis: the synthesis of N-acetylglutamate from glutamate and acetyl-CoA as the acetyl donor, and of ornithine by transacetylation between N(2)-acetylornithine and glutamate. In Bartonella henselae (strain ATCC 49882 / DSM 28221 / CCUG 30454 / Houston 1) (Rochalimaea henselae), this protein is Arginine biosynthesis bifunctional protein ArgJ.